The sequence spans 103 residues: Insulin (103 aa).

The N-terminal stretch at I1–A20 is a signal peptide. 3 cysteine pairs are disulfide-bonded: C27-C89, C39-C102, and C88-C93. Residues D53–V80 constitute a propeptide, c peptide.

It belongs to the insulin family. As to quaternary structure, heterodimer of a B chain and an A chain linked by two disulfide bonds.

It localises to the secreted. Functionally, insulin decreases blood glucose concentration. It increases cell permeability to monosaccharides, amino acids and fatty acids. It accelerates glycolysis, the pentose phosphate cycle, and glycogen synthesis in liver. This chain is Insulin (INS), found in Selasphorus rufus (Rufous hummingbird).